The sequence spans 176 residues: Mitochondrial inner membrane protein Mpv17 (176 aa).

4 helical membrane passes run 18–38 (VQVL…QQLV), 53–73 (TMAS…YRVL), 94–114 (GGFA…LNGL), and 131–151 (LITN…LVPL).

It belongs to the peroxisomal membrane protein PXMP2/4 family.

The protein localises to the mitochondrion inner membrane. Its function is as follows. Non-selective channel that modulates the membrane potential under normal conditions and oxidative stress, and is involved in mitochondrial homeostasis. Involved in mitochondrial deoxynucleoside triphosphates (dNTP) pool homeostasis and mitochondrial DNA (mtDNA) maintenance. May be involved in the regulation of reactive oxygen species metabolism and the control of oxidative phosphorylation. This chain is Mitochondrial inner membrane protein Mpv17, found in Bos taurus (Bovine).